A 229-amino-acid polypeptide reads, in one-letter code: Non-structural protein V (229 aa).

2 stretches are compositionally biased toward polar residues: residues 30–46 and 82–112; these read ATSQ…SSRT and GRQN…LPSP. Residues 30–112 are disordered; sequence ATSQSSLNKP…MGSDTQLPSP (83 aa). The Zn(2+) site is built by H178, C197, C201, C213, C215, C218, C222, and C225.

This sequence belongs to the paramyxoviruses V protein family.

Its function is as follows. Blocks host interferon signaling. The sequence is that of Non-structural protein V (P/V) from Homo sapiens (Human).